A 287-amino-acid polypeptide reads, in one-letter code: Myoblast determination protein 1 homolog B (287 aa).

In terms of domain architecture, bHLH spans 96 to 147; the sequence is DRRRAATMRERRRLSKVNDAFETLKRCTSTNPNQRLPKVDILRNAISYIDSL. Disordered stretches follow at residues 161-202 and 231-277; these read NMEH…FYTD and QSPS…QLSH. Positions 168–188 are enriched in low complexity; it reads DSDASSPSSNCSDGMNSPPCS. A compositionally biased stretch (polar residues) spans 267–277; sequence SPGNSCTQLSH.

As to quaternary structure, efficient DNA binding requires dimerization with another bHLH protein.

It localises to the nucleus. Its function is as follows. May act as a transcriptional activator that promotes transcription of muscle-specific target genes and plays a role in muscle differentiation. In Xenopus laevis (African clawed frog), this protein is Myoblast determination protein 1 homolog B (myod1-b).